Here is a 108-residue protein sequence, read N- to C-terminus: Replication restart protein PriB (108 aa).

Residues 8–108 (IDNRFSVMGV…LHAEQIEFID (101 aa)) form the SSB domain.

This sequence belongs to the PriB family. As to quaternary structure, homodimer. Interacts with PriA and DnaT. Component of the replication restart primosome. Primosome assembly occurs via a 'hand-off' mechanism. PriA binds to replication forks, subsequently PriB then DnaT bind; DnaT then displaces ssDNA to generate the helicase loading substrate.

Involved in the restart of stalled replication forks, which reloads the replicative helicase on sites other than the origin of replication; the PriA-PriB pathway is the major replication restart pathway. During primosome assembly it facilitates complex formation between PriA and DnaT on DNA; stabilizes PriA on DNA. Stimulates the DNA unwinding activity of PriA helicase. This chain is Replication restart protein PriB, found in Haemophilus influenzae (strain 86-028NP).